Reading from the N-terminus, the 543-residue chain is Chaperonin GroEL (543 aa).

Residues 29 to 32, 86 to 90, Gly413, and Asp504 each bind ATP; these read TVGP and DGTTT.

This sequence belongs to the chaperonin (HSP60) family. Forms a cylinder of 14 subunits composed of two heptameric rings stacked back-to-back. Interacts with the co-chaperonin GroES.

Its subcellular location is the cytoplasm. It catalyses the reaction ATP + H2O + a folded polypeptide = ADP + phosphate + an unfolded polypeptide.. Functionally, together with its co-chaperonin GroES, plays an essential role in assisting protein folding. The GroEL-GroES system forms a nano-cage that allows encapsulation of the non-native substrate proteins and provides a physical environment optimized to promote and accelerate protein folding. The protein is Chaperonin GroEL of Mycoplasma pneumoniae (strain ATCC 29342 / M129 / Subtype 1) (Mycoplasmoides pneumoniae).